The sequence spans 427 residues: Enolase (427 aa).

Residue Gln163 coordinates (2R)-2-phosphoglycerate. Glu205 (proton donor) is an active-site residue. The Mg(2+) site is built by Asp242, Glu285, and Asp312. Positions 337, 366, 367, and 388 each coordinate (2R)-2-phosphoglycerate. Residue Lys337 is the Proton acceptor of the active site.

Belongs to the enolase family. It depends on Mg(2+) as a cofactor.

Its subcellular location is the cytoplasm. The protein resides in the secreted. The protein localises to the cell surface. It catalyses the reaction (2R)-2-phosphoglycerate = phosphoenolpyruvate + H2O. Its pathway is carbohydrate degradation; glycolysis; pyruvate from D-glyceraldehyde 3-phosphate: step 4/5. Its function is as follows. Catalyzes the reversible conversion of 2-phosphoglycerate (2-PG) into phosphoenolpyruvate (PEP). It is essential for the degradation of carbohydrates via glycolysis. The sequence is that of Enolase from Xanthobacter autotrophicus (strain ATCC BAA-1158 / Py2).